The chain runs to 611 residues: UvrABC system protein C (611 aa).

A GIY-YIG domain is found at 19–97 (QRPGVYRMVD…IKELRPRYNV (79 aa)). The 36-residue stretch at 207–242 (NQVIEELGARMEAASERLEFEAAAQYRDRIQALQAV) folds into the UVR domain.

Belongs to the UvrC family. As to quaternary structure, interacts with UvrB in an incision complex.

It is found in the cytoplasm. The UvrABC repair system catalyzes the recognition and processing of DNA lesions. UvrC both incises the 5' and 3' sides of the lesion. The N-terminal half is responsible for the 3' incision and the C-terminal half is responsible for the 5' incision. This Alkalilimnicola ehrlichii (strain ATCC BAA-1101 / DSM 17681 / MLHE-1) protein is UvrABC system protein C.